Here is a 529-residue protein sequence, read N- to C-terminus: MIFVGLSHKTAPIEVRERLAIGRDRLPEVLARLTAHPAIGEALVLSTCNRVEIYASPRQQAPAPPRPGSAPPPSDEELSRNNEALRAAVATLVGLGGDAVRGHLAGRVGSDAVLHLFRVAASLDSMVVGEPQILGQMKEAIEVARGAKTLGVRLGRAAHRAIKVGKRVRTETAIGAGQVSVSSVAIDLARQIFADLAGHTALLIGAGDMAEAASKLLVRAGARLIVVNRSPDRAAALAREVGGEPRPWADLERSVIDADIVISSTSSPNYVVTPDLVRRARKARKGRSLFLIDIAVPRDIDPAVNKLDSVYLYDVDDLSQIVAESVEGRAAEAARAEAIVADEAQAFEAWTLERALTPTIVGLRARTRSILVAEVERSLSGKLRHLGVAERQALAMMIDAATNKLLHVPTTRLRAMASDPRVAEHVDSLRELFDIDGAPPENAAASALAEGELRGAVDGPPTPRSARGAAPPASGARGGGSPRHADPRPQAAEDNGVYARQPGGRPAEAGVMAVANPAAAVSAAGLKGA.

47 to 50 serves as a coordination point for substrate; sequence TCNR. Residue C48 is the Nucleophile of the active site. Positions 56–80 are disordered; sequence SPRQQAPAPPRPGSAPPPSDEELSR. Pro residues predominate over residues 62-73; it reads PAPPRPGSAPPP. Substrate-binding positions include S125, 130 to 132, and Q136; that span reads EPQ. 205-210 is a binding site for NADP(+); sequence GAGDMA. The disordered stretch occupies residues 454–505; sequence RGAVDGPPTPRSARGAAPPASGARGGGSPRHADPRPQAAEDNGVYARQPGGR. Low complexity predominate over residues 464–475; the sequence is RSARGAAPPASG.

The protein belongs to the glutamyl-tRNA reductase family. Homodimer.

The catalysed reaction is (S)-4-amino-5-oxopentanoate + tRNA(Glu) + NADP(+) = L-glutamyl-tRNA(Glu) + NADPH + H(+). The protein operates within porphyrin-containing compound metabolism; protoporphyrin-IX biosynthesis; 5-aminolevulinate from L-glutamyl-tRNA(Glu): step 1/2. Its function is as follows. Catalyzes the NADPH-dependent reduction of glutamyl-tRNA(Glu) to glutamate 1-semialdehyde (GSA). The protein is Glutamyl-tRNA reductase of Sorangium cellulosum (strain So ce56) (Polyangium cellulosum (strain So ce56)).